The primary structure comprises 323 residues: Galectin-4 (323 aa).

2 Galectin domains span residues 19-150 and 194-323; these read YYKP…INFI and YKTR…YVQI. Position 256–262 (256–262) interacts with a beta-D-galactoside; that stretch reads WGAEERK.

Monomer.

Its function is as follows. Galectin that binds lactose and a related range of sugars. May be involved in the assembly of adherens junctions. The chain is Galectin-4 (LGALS4) from Sus scrofa (Pig).